Reading from the N-terminus, the 175-residue chain is FMRFamide-like neuropeptides 1 (175 aa).

A signal peptide spans Met1–Ala21. Positions Glu22–Lys68 are excised as a propeptide. Tyr76 carries the tyrosine amide modification. Residues Ser79–Gly86 constitute a propeptide that is removed on maturation. Phenylalanine amide is present on residues Phe98, Phe108, Phe120, Phe130, Phe142, and Phe154. The propeptide occupies Ser157–Ser165. Phenylalanine amide is present on Phe173.

This sequence belongs to the FARP (FMRFamide related peptide) family. In terms of processing, may be processed by convertase egl-3. In terms of tissue distribution, each flp gene is expressed in a distinct set of neurons. Flp-1 is expressed in the AVA interneurons, the M5 cholinergic pharyngeal motoneurons, and the AIA, AIY, AVE, AVK, RIG and RMG neurons.

The protein localises to the secreted. Its function is as follows. Together with flp-18, plays a homeostatic role by acting on the GABAergic neural transmission at neuromuscular junctions to prevent overexcitation of the locomotor circuit. Functionally, inhibits the activity of dissected pharyngeal myogenic muscle system. DPNFLRF-amide: Inhibits the activity of dissected pharyngeal myogenic muscle system. In terms of biological role, acts as a ligand for the npr-22 receptor in vitro. The protein is FMRFamide-like neuropeptides 1 (flp-1) of Caenorhabditis elegans.